The chain runs to 103 residues: Small ribosomal subunit protein bS18c (103 aa).

It belongs to the bacterial ribosomal protein bS18 family. As to quaternary structure, part of the 30S ribosomal subunit.

The protein resides in the plastid. The protein localises to the chloroplast. The chain is Small ribosomal subunit protein bS18c from Buxus microphylla (Littleleaf boxwood).